The following is a 138-amino-acid chain: Putative phosphatidylinositol 3,4,5-trisphosphate 3-phosphatase TPTE2P1 (138 aa).

Residues 1–75 (MPAAFPCVFP…FAVEILFGMV (75 aa)) form the C2 tensin-type domain.

The sequence is that of Putative phosphatidylinositol 3,4,5-trisphosphate 3-phosphatase TPTE2P1 (TPTE2P1) from Homo sapiens (Human).